The primary structure comprises 605 residues: Conglutin beta 7 (605 aa).

The first 30 residues, 1–30, serve as a signal peptide directing secretion; that stretch reads MARMRVRFPTLVLLLGILFLMAVSIGIAYG. Residues 37–105 are compositionally biased toward basic and acidic residues; sequence NHERPGEREH…REPCREREQE (69 aa). 3 disordered regions span residues 37-193, 346-367, and 382-405; these read NHER…RFQT, LGNE…SYQD, and LRKH…NLRS. A compositionally biased stretch (low complexity) spans 140–149; it reads QGSSSSSRKQ. The span at 150–179 shows a compositional bias: basic and acidic residues; sequence SGYERRQYHERREQRDEKEKEQDSRSDSRR. Positions 184 to 342 constitute a Cupin type-1 1 domain; that stretch reads YHFSSERFQT…TFNTRYEEIQ (159 aa). The Cupin type-1 2 domain maps to 401 to 563; it reads FNLRSNESIY…TFPGSAQDVE (163 aa). Asn406 and Asn513 each carry an N-linked (GlcNAc...) asparagine glycan. Residues 574-593 are disordered; that stretch reads FANAQPQQKQQREKEGRRGR.

The protein belongs to the 7S seed storage protein family. Component of globulins complexes which accumulate in seeds.

In terms of biological role, seed storage protein. Accumulates during seed development and is hydrolyzed after germination to provide a carbon and nitrogen source for the developing seedling. This chain is Conglutin beta 7, found in Lupinus angustifolius (Narrow-leaved blue lupine).